The sequence spans 445 residues: NAD-specific glutamate dehydrogenase (445 aa).

Lys-124 is a catalytic residue. An NAD(+)-binding site is contributed by Gly-235–Trp-241.

Belongs to the Glu/Leu/Phe/Val dehydrogenases family. As to quaternary structure, homohexamer.

The enzyme catalyses L-glutamate + NAD(+) + H2O = 2-oxoglutarate + NH4(+) + NADH + H(+). The protein is NAD-specific glutamate dehydrogenase (gdhB) of Bacteroides fragilis (strain YCH46).